The primary structure comprises 264 residues: Apolipoprotein A-I (264 aa).

The first 18 residues, 1–18 (MKAVLLVVAALFLAGSQA), serve as a signal peptide directing secretion. 2 consecutive repeat copies span residues 67-88 (LRLS…ADFG) and 89-110 (LATQ…QIVS). The interval 67 to 264 (LRLSDNWDTL…DQASKQLAAQ (198 aa)) is 10 X approximate tandem repeats. The stretch at 111-121 (EDLQDVKHKVQ) is one 3; half-length repeat. 3 repeat units span residues 122 to 143 (PYLE…EKVR), 144 to 165 (PLGI…EKLT), and 166 to 187 (PLGE…TQLA). The 7; truncated repeat unit spans residues 188-207 (PFSEEMRQRLAKRLEELKDS). A Methionine sulfoxide modification is found at Met-193. Repeat 8 spans residues 208-229 (ATLADYHAKASEHLKMLGEKAK). A 9; half-length repeat occupies 230–240 (PALEDLRQGLL). Copy 10 of the repeat occupies 241-264 (PVLENLKASILSSIDQASKQLAAQ).

The protein belongs to the apolipoprotein A1/A4/E family. Homodimer. Interacts with APOA1BP and CLU. Component of a sperm activating protein complex (SPAP), consisting of APOA1, an immunoglobulin heavy chain, an immunoglobulin light chain and albumin. Interacts with NDRG1. Interacts with SCGB3A2. Interacts with NAXE and YJEFN3. Glycosylated. Post-translationally, palmitoylated. In terms of processing, phosphorylation sites are present in the extracellular medium.

It localises to the secreted. Participates in the reverse transport of cholesterol from tissues to the liver for excretion by promoting cholesterol efflux from tissues and by acting as a cofactor for the lecithin cholesterol acyltransferase (LCAT). As part of the SPAP complex, activates spermatozoa motility. The sequence is that of Apolipoprotein A-I (APOA1) from Cavia aperea (Brazilian guinea pig).